The following is a 328-amino-acid chain: Beta-ketoacyl-[acyl-carrier-protein] synthase III (328 aa).

Catalysis depends on residues Cys-114 and His-253. The ACP-binding stretch occupies residues 254–258; that stretch reads QANIR. The active site involves Asn-283.

This sequence belongs to the thiolase-like superfamily. FabH family. In terms of assembly, homodimer.

It localises to the cytoplasm. It carries out the reaction malonyl-[ACP] + acetyl-CoA + H(+) = 3-oxobutanoyl-[ACP] + CO2 + CoA. The protein operates within lipid metabolism; fatty acid biosynthesis. Functionally, catalyzes the condensation reaction of fatty acid synthesis by the addition to an acyl acceptor of two carbons from malonyl-ACP. Catalyzes the first condensation reaction which initiates fatty acid synthesis and may therefore play a role in governing the total rate of fatty acid production. Possesses both acetoacetyl-ACP synthase and acetyl transacylase activities. Its substrate specificity determines the biosynthesis of branched-chain and/or straight-chain of fatty acids. This Clostridioides difficile (strain 630) (Peptoclostridium difficile) protein is Beta-ketoacyl-[acyl-carrier-protein] synthase III.